Reading from the N-terminus, the 589-residue chain is V-type ATP synthase alpha chain 1 (589 aa).

ATP is bound at residue Gly-239–Thr-246.

The protein belongs to the ATPase alpha/beta chains family.

The enzyme catalyses ATP + H2O + 4 H(+)(in) = ADP + phosphate + 5 H(+)(out). In terms of biological role, produces ATP from ADP in the presence of a proton gradient across the membrane. The V-type alpha chain is a catalytic subunit. This Treponema pallidum (strain Nichols) protein is V-type ATP synthase alpha chain 1 (atpA1).